The sequence spans 340 residues: Predicted GPI-anchored protein 46 (340 aa).

An N-terminal signal peptide occupies residues 1 to 29 (MKILLIYSMTPKLVIWFTLFVLCLQMGDT). A compositionally biased stretch (low complexity) spans 99–115 (SETTTTTTQESETSIAT). 2 disordered regions span residues 99-154 (SETT…SLSS) and 181-212 (MSSSSSSSSGSLRDKSKLKQENKQLQSRIKNY). N127 is a glycosylation site (N-linked (GlcNAc...) asparagine). Positions 182–191 (SSSSSSSSGS) are enriched in low complexity. A compositionally biased stretch (basic and acidic residues) spans 192–202 (LRDKSKLKQEN). An N-linked (GlcNAc...) asparagine glycan is attached at N270. N314 is lipidated: GPI-anchor amidated asparagine. Residues 315–340 (SAPLLWIKISKPTVCLVIALTFLLLG) constitute a propeptide, removed in mature form.

Its subcellular location is the cell membrane. It is found in the secreted. The sequence is that of Predicted GPI-anchored protein 46 (PGA46) from Candida albicans (strain SC5314 / ATCC MYA-2876) (Yeast).